The chain runs to 182 residues: Glycerol-3-phosphate acyltransferase 1 (182 aa).

The next 5 helical transmembrane spans lie at 5 to 25 (MQFLYLVASYLFGNILTAYIV), 54 to 74 (GYFVATFLGDAIKGAIVVSIA), 81 to 101 (STFLMLTLLAVIMGHIYPILF), 117 to 137 (IAFDYLIALTLVTVFIIFYLI), and 157 to 177 (ILYSYSIVTTILSVLIIVLIL).

It belongs to the PlsY family. Probably interacts with PlsX.

Its subcellular location is the cell membrane. The catalysed reaction is an acyl phosphate + sn-glycerol 3-phosphate = a 1-acyl-sn-glycero-3-phosphate + phosphate. Its pathway is lipid metabolism; phospholipid metabolism. Its function is as follows. Catalyzes the transfer of an acyl group from acyl-phosphate (acyl-PO(4)) to glycerol-3-phosphate (G3P) to form lysophosphatidic acid (LPA). This enzyme utilizes acyl-phosphate as fatty acyl donor, but not acyl-CoA or acyl-ACP. This is Glycerol-3-phosphate acyltransferase 1 from Bacillus thuringiensis subsp. konkukian (strain 97-27).